The sequence spans 779 residues: Transcriptional regulator QRICH1 (779 aa).

M1 is modified (N-acetylmethionine). The CARD domain occupies 6 to 48 (ENTISFEEYIRVKARSVPQHRMKEFLDSLASKGPEALQEFQQT). Disordered stretches follow at residues 141-163 (QGQA…PSPS) and 219-242 (ALSP…TASV). S346 is subject to Phosphoserine. Residues K354 and K359 each participate in a glycyl lysine isopeptide (Lys-Gly) (interchain with G-Cter in SUMO2) cross-link. Residues 420–430 (QQQPQQQTPQE) show a composition bias toward low complexity. Residues 420–443 (QQQPQQQTPQEQTPPPPQQQQQQQ) are disordered. Residue S467 is modified to Phosphoserine.

The protein resides in the nucleus. It localises to the cytoplasm. It is found in the cell membrane. Its function is as follows. Transcriptional regulator that acts as a mediator of the integrated stress response (ISR) through transcriptional control of protein homeostasis under conditions of ER stress. Controls the outcome of the unfolded protein response (UPR), an ER-stress response pathway that either promotes recovery of ER homeostasis and cell survival, or triggers the terminal UPR which elicits programmed cell death when ER stress is prolonged and unresolved. ER stress induces QRICH1 translation by a ribosome translation re-initiation mechanism in response to EIF2S1/eIF-2-alpha phosphorylation, and stress-induced QRICH1 regulates a transcriptional program associated with protein translation, protein secretion-mediated proteotoxicity and cell death during the terminal UPR. May cooperate with ATF4 transcription factor signaling to regulate ER homeostasis which is critical for cell viability. Up-regulates CASP3/caspase-3 activity in epithelial cells under ER stress. Central regulator of proteotoxicity associated with ER stress-mediated inflammatory diseases in the intestines and liver. Involved in chondrocyte hypertrophy, a process required for normal longitudinal bone growth. This chain is Transcriptional regulator QRICH1 (QRICH1), found in Bos taurus (Bovine).